Consider the following 204-residue polypeptide: NADH-ubiquinone oxidoreductase chain 6 (204 aa).

A run of 5 helical transmembrane segments spans residues 5–25, 29–49, 56–76, 91–111, and 151–171; these read IFLFYLFSIFALISSLMVIGL, VHSVLFLILVFCNVAGLLLLL, FMLIIVYVGAIAVLFLFVVMM, LWPIGILTFVILLSQFFSSFY, and LLFLICGLILLVAMIGVIVLT.

Belongs to the complex I subunit 6 family.

The protein resides in the mitochondrion membrane. The enzyme catalyses a ubiquinone + NADH + 5 H(+)(in) = a ubiquinol + NAD(+) + 4 H(+)(out). In terms of biological role, core subunit of the mitochondrial membrane respiratory chain NADH dehydrogenase (Complex I) that is believed to belong to the minimal assembly required for catalysis. Complex I functions in the transfer of electrons from NADH to the respiratory chain. The immediate electron acceptor for the enzyme is believed to be ubiquinone. The polypeptide is NADH-ubiquinone oxidoreductase chain 6 (ND6) (Chondrus crispus (Carrageen Irish moss)).